Consider the following 351-residue polypeptide: MIEKLEELRAQWRKLQQEVENPSLFSSTQSYRERMRDHAYLSRLMEEYDRYLLTEKQLEDAHVLIQDESDADFKDVIRQEIRTLEAALHTSQKRLKTLLIPPDPLQEKNIIMEIRGGTGGDEAALFAADLFRMYTHYAESKQWRYEVLAVSETELGGFKEITFSISGRDVYGSLRYESGVHRVQRVPSTEASGRIHTSAVTVAVLPEMEETEVDIRAEDVRVDVMRASGPGGQCVNTTDSAVRLTHLPTGIVVVCQDEKSQIKNKAKAMRVLRSRVYDLEESKRQVARARERKSQVGSGDRSERIRTYNFPQNRVTDHRVRVTLYKLDAVMQGALDDIIEPLCIASRESVI.

Position 233 is an N5-methylglutamine (Gln233).

This sequence belongs to the prokaryotic/mitochondrial release factor family. In terms of processing, methylated by PrmC. Methylation increases the termination efficiency of RF1.

The protein resides in the cytoplasm. Peptide chain release factor 1 directs the termination of translation in response to the peptide chain termination codons UAG and UAA. This Treponema pallidum subsp. pallidum (strain SS14) protein is Peptide chain release factor 1.